A 119-amino-acid polypeptide reads, in one-letter code: NADH-quinone oxidoreductase subunit A (119 aa).

The next 3 helical transmembrane spans lie at 9 to 29 (VLLFILVGMGVGVVPLVLGYV), 63 to 83 (LVAILFILFDLEIAFLLPWAV), and 88 to 108 (VGGAGFAAVLIFLTVLVVGFV).

Belongs to the complex I subunit 3 family. NDH-1 is composed of 14 different subunits. Subunits NuoA, H, J, K, L, M, N constitute the membrane sector of the complex.

The protein localises to the cell inner membrane. The enzyme catalyses a quinone + NADH + 5 H(+)(in) = a quinol + NAD(+) + 4 H(+)(out). NDH-1 shuttles electrons from NADH, via FMN and iron-sulfur (Fe-S) centers, to quinones in the respiratory chain. The immediate electron acceptor for the enzyme in this species is believed to be ubiquinone. Couples the redox reaction to proton translocation (for every two electrons transferred, four hydrogen ions are translocated across the cytoplasmic membrane), and thus conserves the redox energy in a proton gradient. The protein is NADH-quinone oxidoreductase subunit A of Delftia acidovorans (strain DSM 14801 / SPH-1).